Here is a 229-residue protein sequence, read N- to C-terminus: Heptaprenylglyceryl phosphate synthase (229 aa).

Residue Lys12 coordinates sn-glycerol 1-phosphate. Mg(2+) is bound by residues Asp14 and Ser40. Sn-glycerol 1-phosphate-binding positions include Tyr159–Gly164, Gly189, and Gly209–Asn210.

This sequence belongs to the GGGP/HepGP synthase family. Group I subfamily. As to quaternary structure, homodimer. Mg(2+) serves as cofactor.

The enzyme catalyses sn-glycerol 1-phosphate + all-trans-heptaprenyl diphosphate = 3-heptaprenyl-sn-glycero-1-phosphate + diphosphate. The protein operates within membrane lipid metabolism; glycerophospholipid metabolism. Functionally, prenyltransferase that catalyzes in vivo the transfer of the heptaprenyl moiety of heptaprenyl pyrophosphate (HepPP; 35 carbon atoms) to the C3 hydroxyl of sn-glycerol-1-phosphate (G1P), producing heptaprenylglyceryl phosphate (HepGP). This reaction is an ether-bond-formation step in the biosynthesis of archaea-type G1P-based membrane lipids found in Bacillales. This chain is Heptaprenylglyceryl phosphate synthase, found in Bacillus cereus (strain ATCC 10987 / NRS 248).